A 265-amino-acid polypeptide reads, in one-letter code: Synaptoporin (265 aa).

The Cytoplasmic portion of the chain corresponds to 1-4; that stretch reads MCMV. The region spanning 1–202 is the MARVEL domain; the sequence is MCMVIFAPLF…NIWFVFKETG (202 aa). Residues 5 to 25 form a helical membrane-spanning segment; that stretch reads IFAPLFAIFAFATCGGYSGGL. The Vesicular portion of the chain corresponds to 26–81; sequence RLSVDCVNKTESNLSIDIAFAYPFRLHQVTFEVPTCEGKERQKLALVGDSSSSAEF. N-linked (GlcNAc...) asparagine glycans are attached at residues asparagine 33 and asparagine 38. The chain crosses the membrane as a helical span at residues 82–102; that stretch reads FVTVAVFAFLYSLAATVVYIF. The Cytoplasmic segment spans residues 103–114; it reads FQNKYRENNRGP. The chain crosses the membrane as a helical span at residues 115–135; it reads LIDFIVTVVFSFLWLVGSSAW. Topologically, residues 136–177 are vesicular; the sequence is AKGLSDVKVATDPKEVLLLMSACKQPSNKCMAVHSPVMSSLN. Residue asparagine 177 is glycosylated (N-linked (GlcNAc...) asparagine). The chain crosses the membrane as a helical span at residues 178–198; it reads TSVVFGFLNFILWAGNIWFVF. The Cytoplasmic portion of the chain corresponds to 199–265; the sequence is KETGWHSSGQ…SGPTSFNNQI (67 aa). The stretch at 210-214 is repeat 1; the sequence is YLSDP. Positions 210–242 are 5 X approximate repeats; that stretch reads YLSDPMEKHSSSYNQGGYNQDSYGSSGGYSQQA. Residues serine 212 and serine 220 each carry the phosphoserine modification. Residues 221-265 are disordered; that stretch reads SYNQGGYNQDSYGSSGGYSQQASLGPTSDEFGQQPSGPTSFNNQI. Tandem repeats lie at residues 222–226, 227–231, 232–236, and 238–242. Positions 224-243 are enriched in low complexity; sequence QGGYNQDSYGSSGGYSQQAS. A compositionally biased stretch (polar residues) spans 244 to 265; sequence LGPTSDEFGQQPSGPTSFNNQI.

Belongs to the synaptophysin/synaptobrevin family. Central nervous system.

The protein resides in the cytoplasmic vesicle. It localises to the secretory vesicle. The protein localises to the synaptic vesicle membrane. It is found in the synapse. Its subcellular location is the synaptosome. In terms of biological role, intrinsic membrane protein of small synaptic vesicles. Probable vesicular channel protein. This Rattus norvegicus (Rat) protein is Synaptoporin (Synpr).